Here is a 376-residue protein sequence, read N- to C-terminus: Flagellin B (376 aa).

Positions 103-130 (SNSSSERQAIQEEVSALNDELNRIAETT) form a coiled coil.

Belongs to the bacterial flagellin family. Heteromer of multiple flagellin subunits including FlaA, FlaB, FlaC, FlaD and possibly FlaE.

Its subcellular location is the secreted. The protein localises to the bacterial flagellum. Its function is as follows. Flagellin is the subunit protein which polymerizes to form the filaments of bacterial flagella. FlaB is not essential for flagellar synthesis and motility. This Vibrio anguillarum (Listonella anguillarum) protein is Flagellin B (flaB).